The primary structure comprises 631 residues: DNA mismatch repair protein MutL (631 aa).

Disordered regions lie at residues 337–362 and 400–429; these read PHSPQIDDSSPYVKPETESSAFELQS and AVQSNAFGSMSVPRETRSGSSGESRPRAEL.

This sequence belongs to the DNA mismatch repair MutL/HexB family.

In terms of biological role, this protein is involved in the repair of mismatches in DNA. It is required for dam-dependent methyl-directed DNA mismatch repair. May act as a 'molecular matchmaker', a protein that promotes the formation of a stable complex between two or more DNA-binding proteins in an ATP-dependent manner without itself being part of a final effector complex. In Shewanella oneidensis (strain ATCC 700550 / JCM 31522 / CIP 106686 / LMG 19005 / NCIMB 14063 / MR-1), this protein is DNA mismatch repair protein MutL.